We begin with the raw amino-acid sequence, 304 residues long: Methionyl-tRNA formyltransferase (304 aa).

Residue serine 111 to proline 114 participates in (6S)-5,6,7,8-tetrahydrofolate binding.

It belongs to the Fmt family.

The catalysed reaction is L-methionyl-tRNA(fMet) + (6R)-10-formyltetrahydrofolate = N-formyl-L-methionyl-tRNA(fMet) + (6S)-5,6,7,8-tetrahydrofolate + H(+). Attaches a formyl group to the free amino group of methionyl-tRNA(fMet). The formyl group appears to play a dual role in the initiator identity of N-formylmethionyl-tRNA by promoting its recognition by IF2 and preventing the misappropriation of this tRNA by the elongation apparatus. The sequence is that of Methionyl-tRNA formyltransferase from Campylobacter fetus subsp. fetus (strain 82-40).